The sequence spans 614 residues: MPAYRSRTSTHGRNMAGARGLWRATGMKNEDFGKPIIAVVNSFTQFVPGHVHLKDLGQLVAREIEKAGGVAKEFHTIAVDDGIAMGHDGMLYSLPSREVIADSVEYMVNAHCADAMVCISNCDKITPGMLMASLRLNIPSVFVSGGPMESGKVTLNGKVKSVDLIDAMVAAADDSVSDADVEAIERSACPTCGSCSGMFTANSMNCLTEALGLALPGNGSVLATHADRKGLFVEAGHLIVDMARRYYEQNDERVLPRSVASFKAFENAMTLDISMGGSTNTVLHLLAAAYEGEVPFTMADIDRLSRRVPVLCKVAPSVADVHLEDVHRAGGIMGILGELDRAGLIDASLPTVHSNSLREALERWDIKRTKSESVRTFYTAAPGGVRTEIAFSQDKRFEELDADRAKGCIRDAEHAFSKDGGLAVLYGNIARDGCIVKTAGVDDSILTFSGPARVFESQDAAVDAILGNRIKPGDVVLIRYEGPRGGPGMQEMLYPTSYLKSKGLGKQCALITDGRFSGGSSGLSIGHVSPEAAEGGAIGLVEEGDLIAFDIPNRKVHLDVSDAELERRRAAMEAKGDKAWKPAAPRTRRITMALKAYAAHTTSAALGAVRVVKD.

Asp-81 serves as a coordination point for Mg(2+). A [2Fe-2S] cluster-binding site is contributed by Cys-122. Asp-123 and Lys-124 together coordinate Mg(2+). N6-carboxylysine is present on Lys-124. Cys-195 contributes to the [2Fe-2S] cluster binding site. Residue Glu-491 coordinates Mg(2+). The active-site Proton acceptor is Ser-517.

It belongs to the IlvD/Edd family. Homodimer. Requires [2Fe-2S] cluster as cofactor. Mg(2+) serves as cofactor.

The enzyme catalyses (2R)-2,3-dihydroxy-3-methylbutanoate = 3-methyl-2-oxobutanoate + H2O. It carries out the reaction (2R,3R)-2,3-dihydroxy-3-methylpentanoate = (S)-3-methyl-2-oxopentanoate + H2O. It functions in the pathway amino-acid biosynthesis; L-isoleucine biosynthesis; L-isoleucine from 2-oxobutanoate: step 3/4. It participates in amino-acid biosynthesis; L-valine biosynthesis; L-valine from pyruvate: step 3/4. Functions in the biosynthesis of branched-chain amino acids. Catalyzes the dehydration of (2R,3R)-2,3-dihydroxy-3-methylpentanoate (2,3-dihydroxy-3-methylvalerate) into 2-oxo-3-methylpentanoate (2-oxo-3-methylvalerate) and of (2R)-2,3-dihydroxy-3-methylbutanoate (2,3-dihydroxyisovalerate) into 2-oxo-3-methylbutanoate (2-oxoisovalerate), the penultimate precursor to L-isoleucine and L-valine, respectively. This chain is Dihydroxy-acid dehydratase, found in Nitrobacter winogradskyi (strain ATCC 25391 / DSM 10237 / CIP 104748 / NCIMB 11846 / Nb-255).